A 1347-amino-acid polypeptide reads, in one-letter code: DExH-box ATP-dependent RNA helicase DExH11 (1347 aa).

The tract at residues 263-291 is disordered; that stretch reads ELEGDDHTAGSESPKAEAEPDAKASISNE. Residues 267 to 284 show a composition bias toward basic and acidic residues; the sequence is DDHTAGSESPKAEAEPDA. The region spanning 369–524 is the Helicase ATP-binding domain; that stretch reads ICCLEKGESV…WIGRTKQKEI (156 aa). Residue 382 to 389 participates in ATP binding; the sequence is AHTSAGKT. A DEVH box motif is present at residues 472 to 475; the sequence is DEVH. The segment at 566–625 is disordered; it reads SQKKKNSNAVSVAPKQQMGSSAHQDGSKSQKHEAHSRGKQNKHSSVKDVGKSSYSGNSQN. Residues 590-601 show a composition bias toward basic and acidic residues; that stretch reads DGSKSQKHEAHS. Residues 673–838 enclose the Helicase C-terminal domain; it reads DLTSSSEKSE…LTYIMILHLL (166 aa).

The protein belongs to the DExH box helicase family. SKI2 subfamily. Component of the cytoplasmic SKI complex, which consists of SKI2, SKI3 and VIP3/SKI8. In terms of tissue distribution, expressed in vascular tissues of leaves and roots of young plants.

Its subcellular location is the cytoplasm. It carries out the reaction ATP + H2O = ADP + phosphate + H(+). In terms of biological role, component of the SKI complex which is thought to be involved in exosome-mediated RNA decay and associates with transcriptionally active genes in a manner dependent on PAF1 complex (PAF1C). Involved in the regulation of potassium deprivation stress response. This chain is DExH-box ATP-dependent RNA helicase DExH11, found in Arabidopsis thaliana (Mouse-ear cress).